Consider the following 1222-residue polypeptide: ATP-dependent helicase/nuclease subunit A (1222 aa).

Residues 39 to 495 (QKRTAQQIEA…ILLKENFRSQ (457 aa)) form the UvrD-like helicase ATP-binding domain. 60–67 (ASAGSGKT) lines the ATP pocket. In terms of domain architecture, UvrD-like helicase C-terminal spans 524–810 (QLIAGSHAQT…NLMTIHKSKG (287 aa)).

This sequence belongs to the helicase family. AddA subfamily. In terms of assembly, heterodimer of AddA and AddB/RexB. Mg(2+) is required as a cofactor.

The catalysed reaction is Couples ATP hydrolysis with the unwinding of duplex DNA by translocating in the 3'-5' direction.. The enzyme catalyses ATP + H2O = ADP + phosphate + H(+). Its function is as follows. The heterodimer acts as both an ATP-dependent DNA helicase and an ATP-dependent, dual-direction single-stranded exonuclease. Recognizes the chi site generating a DNA molecule suitable for the initiation of homologous recombination. The AddA nuclease domain is required for chi fragment generation; this subunit has the helicase and 3' -&gt; 5' nuclease activities. This chain is ATP-dependent helicase/nuclease subunit A, found in Streptococcus pyogenes serotype M18 (strain MGAS8232).